The following is a 92-amino-acid chain: Large ribosomal subunit protein bL27 (92 aa).

Residues 1 to 21 (MSKKKGVGSSRNGRDSESKRL) are disordered. Over residues 12–21 (NGRDSESKRL) the composition is skewed to basic and acidic residues.

Belongs to the bacterial ribosomal protein bL27 family.

The sequence is that of Large ribosomal subunit protein bL27 from Halothermothrix orenii (strain H 168 / OCM 544 / DSM 9562).